Reading from the N-terminus, the 212-residue chain is Leucyl/phenylalanyl-tRNA--protein transferase (212 aa).

Belongs to the L/F-transferase family.

The protein localises to the cytoplasm. It catalyses the reaction N-terminal L-lysyl-[protein] + L-leucyl-tRNA(Leu) = N-terminal L-leucyl-L-lysyl-[protein] + tRNA(Leu) + H(+). It carries out the reaction N-terminal L-arginyl-[protein] + L-leucyl-tRNA(Leu) = N-terminal L-leucyl-L-arginyl-[protein] + tRNA(Leu) + H(+). The enzyme catalyses L-phenylalanyl-tRNA(Phe) + an N-terminal L-alpha-aminoacyl-[protein] = an N-terminal L-phenylalanyl-L-alpha-aminoacyl-[protein] + tRNA(Phe). Functionally, functions in the N-end rule pathway of protein degradation where it conjugates Leu, Phe and, less efficiently, Met from aminoacyl-tRNAs to the N-termini of proteins containing an N-terminal arginine or lysine. The protein is Leucyl/phenylalanyl-tRNA--protein transferase of Paracoccus denitrificans (strain Pd 1222).